Reading from the N-terminus, the 205-residue chain is Large ribosomal subunit protein uL3 (205 aa).

The protein belongs to the universal ribosomal protein uL3 family. As to quaternary structure, part of the 50S ribosomal subunit. Forms a cluster with proteins L14 and L19.

Its function is as follows. One of the primary rRNA binding proteins, it binds directly near the 3'-end of the 23S rRNA, where it nucleates assembly of the 50S subunit. In Bacteroides fragilis (strain ATCC 25285 / DSM 2151 / CCUG 4856 / JCM 11019 / LMG 10263 / NCTC 9343 / Onslow / VPI 2553 / EN-2), this protein is Large ribosomal subunit protein uL3.